The sequence spans 621 residues: tRNA uridine 5-carboxymethylaminomethyl modification enzyme MnmG (621 aa).

9–14 is an FAD binding site; it reads GGGHAG. 270 to 284 is an NAD(+) binding site; that stretch reads GPRYCPSIEDKIVKF.

It belongs to the MnmG family. As to quaternary structure, homodimer. Heterotetramer of two MnmE and two MnmG subunits. Requires FAD as cofactor.

It is found in the cytoplasm. Functionally, NAD-binding protein involved in the addition of a carboxymethylaminomethyl (cmnm) group at the wobble position (U34) of certain tRNAs, forming tRNA-cmnm(5)s(2)U34. The chain is tRNA uridine 5-carboxymethylaminomethyl modification enzyme MnmG from Borreliella burgdorferi (strain ATCC 35210 / DSM 4680 / CIP 102532 / B31) (Borrelia burgdorferi).